Here is a 442-residue protein sequence, read N- to C-terminus: Signal recognition particle 54 kDa protein (442 aa).

GTP is bound by residues 106–113 (GLQGSGKT), 186–190 (DTAGR), and 244–247 (TKLD).

Belongs to the GTP-binding SRP family. SRP54 subfamily. In terms of assembly, part of the signal recognition particle protein translocation system, which is composed of SRP and FtsY. Archaeal SRP consists of a 7S RNA molecule of 300 nucleotides and two protein subunits: SRP54 and SRP19.

The protein resides in the cytoplasm. The enzyme catalyses GTP + H2O = GDP + phosphate + H(+). In terms of biological role, involved in targeting and insertion of nascent membrane proteins into the cytoplasmic membrane. Binds to the hydrophobic signal sequence of the ribosome-nascent chain (RNC) as it emerges from the ribosomes. The SRP-RNC complex is then targeted to the cytoplasmic membrane where it interacts with the SRP receptor FtsY. In Methanothermobacter thermautotrophicus (strain ATCC 29096 / DSM 1053 / JCM 10044 / NBRC 100330 / Delta H) (Methanobacterium thermoautotrophicum), this protein is Signal recognition particle 54 kDa protein.